The sequence spans 271 residues: Protein ABHD14A (271 aa).

Residues 35–55 (VALLGLSLLLMLLLYVGLPGP) form a helical; Signal-anchor for type II membrane protein membrane-spanning segment. Residue Asn-67 is glycosylated (N-linked (GlcNAc...) asparagine). The active-site Charge relay system is Ser-171. An N-linked (GlcNAc...) asparagine glycan is attached at Asn-201. Residues Asp-222 and His-249 each act as charge relay system in the active site.

It belongs to the AB hydrolase superfamily. ABHD14 family.

The protein resides in the cytoplasm. It localises to the membrane. Possible role in granule neuron development. The polypeptide is Protein ABHD14A (Homo sapiens (Human)).